Here is a 796-residue protein sequence, read N- to C-terminus: Protein translocase subunit SecA 2 (796 aa).

ATP is bound by residues Q84, 102–106, and D496; that span reads GEGKT.

Belongs to the SecA family. As to quaternary structure, monomer and homodimer. Part of the essential Sec protein translocation apparatus which comprises SecA, SecYEG and auxiliary proteins SecDF. Other proteins may also be involved.

The protein localises to the cell membrane. It is found in the cytoplasm. It carries out the reaction ATP + H2O + cellular proteinSide 1 = ADP + phosphate + cellular proteinSide 2.. Part of the Sec protein translocase complex. Interacts with the SecYEG preprotein conducting channel. Has a central role in coupling the hydrolysis of ATP to the transfer of proteins into and across the cell membrane, serving as an ATP-driven molecular motor driving the stepwise translocation of polypeptide chains across the membrane. The polypeptide is Protein translocase subunit SecA 2 (Staphylococcus aureus (strain MRSA252)).